A 1938-amino-acid polypeptide reads, in one-letter code: Autophagy-related protein 2 homolog A (1938 aa).

Positions 14 to 111 (ERVCRYLLHH…QLTLQPRRGP (98 aa)) constitute a Chorein N-terminal domain. A phosphoserine mark is found at Ser-765, Ser-878, Ser-892, Ser-894, Ser-1266, Ser-1301, and Ser-1309. Residues 1242–1272 (DLHPPPRPPSPTEIAGQKLSESPASLPSCPP) are disordered. Residues 1315 to 1359 (LFPGERSGAPPPSPPVGGPAGSLGSCSEEKEDEREEEGDGDTLDS) are disordered. A compositionally biased stretch (acidic residues) spans 1343–1359 (EKEDEREEEGDGDTLDS). The WIPI-interacting stretch occupies residues 1358–1404 (DSDEFCILDAPGLGIPPRDGEPVVTQLHPGPIVVRDGYFSRPIGSTD). Residue Ser-1402 is modified to Phosphoserine. Disordered regions lie at residues 1438-1476 (PHPGHRARTGLSGPRSSPSRCSGPNRPQNSWRTQGGSGR) and 1614-1657 (GETS…PSPP). Residues 1446-1464 (TGLSGPRSSPSRCSGPNRP) show a composition bias toward low complexity.

The protein belongs to the ATG2 family. As to quaternary structure, interacts with ATG9A (via C-terminus). Interacts (via WIPI-interacting region) with WDR45B/WIPI3. Interacts (via WIPI-interacting region) with WDR45/WIPI4. Interacts with TMEM41B. Interacts with VMP1.

It localises to the preautophagosomal structure membrane. The protein localises to the lipid droplet. It is found in the endoplasmic reticulum membrane. It catalyses the reaction a 1,2-diacyl-sn-glycero-3-phospho-L-serine(in) = a 1,2-diacyl-sn-glycero-3-phospho-L-serine(out). The catalysed reaction is a 1,2-diacyl-sn-glycero-3-phosphoethanolamine(in) = a 1,2-diacyl-sn-glycero-3-phosphoethanolamine(out). In terms of biological role, lipid transfer protein involved in autophagosome assembly. Tethers the edge of the isolation membrane (IM) to the endoplasmic reticulum (ER) and mediates direct lipid transfer from ER to IM for IM expansion. Binds to the ER exit site (ERES), which is the membrane source for autophagosome formation, and extracts phospholipids from the membrane source and transfers them to ATG9 (ATG9A or ATG9B) to the IM for membrane expansion. Lipid transfer activity is enhanced by WIPI1 and WDR45/WIPI4, which promote ATG2A-association with phosphatidylinositol 3-monophosphate (PI3P)-containing membranes. Also regulates lipid droplets morphology and distribution within the cell. The polypeptide is Autophagy-related protein 2 homolog A (Homo sapiens (Human)).